Consider the following 207-residue polypeptide: Small ribosomal subunit protein uS4 (207 aa).

The disordered stretch occupies residues 31–55 (KCKLDSKPGQHGRTSGARTSDYGTQ). The segment covering 42–53 (GRTSGARTSDYG) has biased composition (polar residues). The S4 RNA-binding domain maps to 97-160 (SRLDNVVYRM…KKQARIVEAL (64 aa)).

Belongs to the universal ribosomal protein uS4 family. As to quaternary structure, part of the 30S ribosomal subunit. Contacts protein S5. The interaction surface between S4 and S5 is involved in control of translational fidelity.

In terms of biological role, one of the primary rRNA binding proteins, it binds directly to 16S rRNA where it nucleates assembly of the body of the 30S subunit. Its function is as follows. With S5 and S12 plays an important role in translational accuracy. This chain is Small ribosomal subunit protein uS4, found in Burkholderia lata (strain ATCC 17760 / DSM 23089 / LMG 22485 / NCIMB 9086 / R18194 / 383).